A 228-amino-acid chain; its full sequence is Thermonuclease (228 aa).

Positions 1 to 23 (MTEYLLSAGICMAIVSILLIGMA) are cleaved as a signal peptide. The propeptide occupies 24–60 (ISNVSKEQYAKRFFFFATSCLVLTLVVASSLSSSANA). D100 serves as a coordination point for Ca(2+). R114 is an active-site residue. Ca(2+)-binding residues include D119 and T120. Catalysis depends on residues E122 and R166.

This sequence belongs to the thermonuclease family. It depends on Ca(2+) as a cofactor.

Its subcellular location is the secreted. The enzyme catalyses Endonucleolytic cleavage to nucleoside 3'-phosphates and 3'-phosphooligonucleotide end-products.. Functionally, enzyme that catalyzes the hydrolysis of both DNA and RNA at the 5' position of the phosphodiester bond. This is Thermonuclease (nuc) from Staphylococcus aureus (strain MRSA252).